Reading from the N-terminus, the 447-residue chain is Exodeoxyribonuclease 7 large subunit (447 aa).

This sequence belongs to the XseA family. As to quaternary structure, heterooligomer composed of large and small subunits.

The protein resides in the cytoplasm. The catalysed reaction is Exonucleolytic cleavage in either 5'- to 3'- or 3'- to 5'-direction to yield nucleoside 5'-phosphates.. Bidirectionally degrades single-stranded DNA into large acid-insoluble oligonucleotides, which are then degraded further into small acid-soluble oligonucleotides. This Lactiplantibacillus plantarum (strain ATCC BAA-793 / NCIMB 8826 / WCFS1) (Lactobacillus plantarum) protein is Exodeoxyribonuclease 7 large subunit.